A 173-amino-acid chain; its full sequence is Co-chaperone protein HscB homolog (173 aa).

Residues 5-77 (CHFALFDLQP…SQRARYLLAL (73 aa)) form the J domain.

It belongs to the HscB family. Interacts with HscA and stimulates its ATPase activity.

Its function is as follows. Co-chaperone involved in the maturation of iron-sulfur cluster-containing proteins. Seems to help targeting proteins to be folded toward HscA. This chain is Co-chaperone protein HscB homolog, found in Ectopseudomonas mendocina (strain ymp) (Pseudomonas mendocina).